Here is a 182-residue protein sequence, read N- to C-terminus: Isopentenyl-diphosphate Delta-isomerase (182 aa).

The Mn(2+) site is built by His-25 and His-32. Positions 30-164 (LLHLAFSSWL…PWAFSPWMVM (135 aa)) constitute a Nudix hydrolase domain. Cys-67 is an active-site residue. Cys-67 lines the Mg(2+) pocket. His-69 is a binding site for Mn(2+). Mg(2+) is bound at residue Glu-87. The Mn(2+) site is built by Glu-114 and Glu-116. The active site involves Glu-116.

The protein belongs to the IPP isomerase type 1 family. In terms of assembly, homodimer. Mg(2+) serves as cofactor. The cofactor is Mn(2+).

The protein resides in the cytoplasm. It carries out the reaction isopentenyl diphosphate = dimethylallyl diphosphate. Its pathway is isoprenoid biosynthesis; dimethylallyl diphosphate biosynthesis; dimethylallyl diphosphate from isopentenyl diphosphate: step 1/1. Catalyzes the 1,3-allylic rearrangement of the homoallylic substrate isopentenyl (IPP) to its highly electrophilic allylic isomer, dimethylallyl diphosphate (DMAPP). In Shigella boydii serotype 4 (strain Sb227), this protein is Isopentenyl-diphosphate Delta-isomerase.